We begin with the raw amino-acid sequence, 292 residues long: NAD(P)H-hydrate epimerase (292 aa).

The transit peptide at 1-52 (MYGLRTLFSLGLLVGGARLGARVAQVGALGGTCPLGQGLVADGNSQCKQFRT) directs the protein to the mitochondrion. Positions 68-279 (AQAVDEELFN…ALEKKYSLNL (212 aa)) constitute a YjeF N-terminal domain. 122 to 126 (NNGGD) serves as a coordination point for (6S)-NADPHX. Residues asparagine 123 and aspartate 189 each contribute to the K(+) site. (6S)-NADPHX is bound by residues 193–199 (GFSFKGA) and aspartate 222. Serine 225 contacts K(+).

Belongs to the NnrE/AIBP family. K(+) is required as a cofactor.

The protein resides in the mitochondrion. The protein localises to the secreted. It catalyses the reaction (6R)-NADHX = (6S)-NADHX. The catalysed reaction is (6R)-NADPHX = (6S)-NADPHX. In terms of biological role, catalyzes the epimerization of the S- and R-forms of NAD(P)HX, a damaged form of NAD(P)H that is a result of enzymatic or heat-dependent hydration. This is a prerequisite for the S-specific NAD(P)H-hydrate dehydratase to allow the repair of both epimers of NAD(P)HX. The protein is NAD(P)H-hydrate epimerase of Xenopus tropicalis (Western clawed frog).